The following is a 573-amino-acid chain: MVSARIVVLLAVLLCAAAAVASSWEDDNHHHHGGHKSGRCVRRCEDRPWHQRPRCLEQCREEEREKRQERSRHEADDRSGEGSSEDEREREQEKEEKQKDRRPYVFDRRSFRRVVRSEQGSLRVLRPFDEVSRLLRGIRDYRVAVLEANPRSFVVPSHTDAHCIGYVAEGEGVVTTIENGERRSYTIKQGHVFVAPAGAVTYLANTDGRKKLVITKILHTISVPGEFQFFFGPGGRNPESFLSSFSKSIQRAAYKTSSDRLERLFGRHGQDKGIIVRATEEQTRELRRHASEGGHGPHWPLPPFGESRGPYSLLDQRPSIANQHGQLYEADARSFHDLAEHDVSVSFANITAGSMSAPLYNTRSFKIAYVPNGKGYAEIVCPHRQSQGGESERERGKGRRSEEEEESSEEQEEVGQGYHTIRARLSPGTAFVVPAGHPFVAVASRDSNLQIVCFEVHADRNEKVFLAGADNVLQKLDRVAKALSFASKAEEVDEVLGSRREKGFLPGPKESGGHEEREQEEEEREERHGGRGERERHGREEREKEEEEREGRHGRGRREEVAETLLRMVTARM.

Residues Met-1–Ala-18 constitute a signal peptide (or 21). A propeptide spanning residues Ala-19–Asp-86 is cleaved from the precursor. Residues Glu-65–Arg-102 are disordered. Cupin type-1 domains lie at Tyr-104 to Glu-262 and Tyr-311 to Asp-493. Residues Arg-288–Asp-315 are disordered. N-linked (GlcNAc...) asparagine glycosylation is present at Asn-349. Disordered regions lie at residues Pro-382–Gln-416 and Ser-498–Met-573. Positions Glu-390–Glu-402 are enriched in basic and acidic residues. Residues Glu-403–Glu-413 show a composition bias toward acidic residues. Basic and acidic residues-rich tracts occupy residues Glu-525–Arg-542 and Arg-549–Val-561.

This sequence belongs to the 7S seed storage protein family. Three protein-processing steps occur in the formation of the mature protein from the primary translation product.

The chain is Globulin-1 S allele (GLB1) from Zea mays (Maize).